Consider the following 1462-residue polypeptide: DNA polymerase alpha catalytic subunit (1462 aa).

2 disordered regions span residues M1–E33 and D98–V123. Basic residues predominate over residues R20 to K29. Positions A106–R116 are enriched in basic and acidic residues. A Phosphothreonine modification is found at T174. Phosphoserine is present on residues S186, S190, and S209. K224 is modified (N6-acetyllysine). Positions D232–D251 are disordered. T406 bears the Phosphothreonine mark. The interval R650–I715 is DNA-binding. K970 carries the post-translational modification N6-succinyllysine. The DNA-binding stretch occupies residues Q1245–K1376. C1283, C1286, C1310, C1315, C1348, C1353, C1371, and C1374 together coordinate Zn(2+). The segment at C1283 to S1318 adopts a CysA-type zinc-finger fold. Positions C1348 to C1374 match the CysB motif motif.

The protein belongs to the DNA polymerase type-B family. Component of the alpha DNA polymerase complex (also known as the alpha DNA polymerase-primase complex) consisting of four subunits: the catalytic subunit POLA1, the regulatory subunit POLA2, and the primase complex subunits PRIM1 and PRIM2 respectively. Interacts with PARP1; this interaction functions as part of the control of replication fork progression. Interacts with MCM10 and WDHD1; these interactions recruit the polymerase alpha complex to the pre-replicative complex bound to DNA. Interacts with RPA1; this interaction stabilizes the replicative complex and reduces the misincorporation rate of DNA polymerase alpha by acting as a fidelity clamp. In terms of assembly, (Microbial infection) Interacts with SV40 Large T antigen; this interaction allows viral DNA replication. As to quaternary structure, (Microbial infection) Interacts with herpes simplex virus 1/HHV-1 replication origin-binding protein UL9. In terms of processing, a 165 kDa form is probably produced by proteolytic cleavage at Lys-124.

The protein localises to the nucleus. It localises to the cytoplasm. The protein resides in the cytosol. The enzyme catalyses DNA(n) + a 2'-deoxyribonucleoside 5'-triphosphate = DNA(n+1) + diphosphate. With respect to regulation, autoinhibited in apo-primosome, where the zinc motif of POLA1 and oligonucleotide/olicosaccharide-binding domain of POLA2 are placed into the active site blocking RNA:DNA duplex entry. Functionally, catalytic subunit of the DNA polymerase alpha complex (also known as the alpha DNA polymerase-primase complex) which plays an essential role in the initiation of DNA synthesis. During the S phase of the cell cycle, the DNA polymerase alpha complex (composed of a catalytic subunit POLA1, a regulatory subunit POLA2 and two primase subunits PRIM1 and PRIM2) is recruited to DNA at the replicative forks via direct interactions with MCM10 and WDHD1. The primase subunit of the polymerase alpha complex initiates DNA synthesis by oligomerising short RNA primers on both leading and lagging strands. These primers are initially extended by the polymerase alpha catalytic subunit and subsequently transferred to polymerase delta and polymerase epsilon for processive synthesis on the lagging and leading strand, respectively. The reason this transfer occurs is because the polymerase alpha has limited processivity and lacks intrinsic 3' exonuclease activity for proofreading error, and therefore is not well suited for replicating long complexes. In the cytosol, responsible for a substantial proportion of the physiological concentration of cytosolic RNA:DNA hybrids, which are necessary to prevent spontaneous activation of type I interferon responses. The sequence is that of DNA polymerase alpha catalytic subunit (POLA1) from Homo sapiens (Human).